Consider the following 350-residue polypeptide: Biotin synthase (350 aa).

The region spanning 54–278 (REIQLSTLLS…TMPQSYVRLS (225 aa)) is the Radical SAM core domain. [4Fe-4S] cluster is bound by residues cysteine 69, cysteine 73, and cysteine 76. Residues cysteine 113, cysteine 144, cysteine 204, and arginine 276 each coordinate [2Fe-2S] cluster.

Belongs to the radical SAM superfamily. Biotin synthase family. Homodimer. The cofactor is [4Fe-4S] cluster. Requires [2Fe-2S] cluster as cofactor.

The enzyme catalyses (4R,5S)-dethiobiotin + (sulfur carrier)-SH + 2 reduced [2Fe-2S]-[ferredoxin] + 2 S-adenosyl-L-methionine = (sulfur carrier)-H + biotin + 2 5'-deoxyadenosine + 2 L-methionine + 2 oxidized [2Fe-2S]-[ferredoxin]. Its pathway is cofactor biosynthesis; biotin biosynthesis; biotin from 7,8-diaminononanoate: step 2/2. Functionally, catalyzes the conversion of dethiobiotin (DTB) to biotin by the insertion of a sulfur atom into dethiobiotin via a radical-based mechanism. The chain is Biotin synthase from Neisseria meningitidis serogroup C (strain 053442).